We begin with the raw amino-acid sequence, 232 residues long: Polycomb group RING finger protein 5-B (232 aa).

Residues 18 to 57 form an RING-type zinc finger; sequence CFVCKGYLIKPTTVTECLHTFCKSCIVQHFEDSNDCPKCG. The segment covering 93 to 104 has biased composition (basic and acidic residues); it reads QEDEFWRRKESN. The segment at 93 to 128 is disordered; the sequence is QEDEFWRRKESNDENGPMCKKRRVDEEDDDKGDGDY.

Component of a PRC1-like complex.

Its subcellular location is the nucleus. In terms of biological role, component of Polycomb group (PcG) multiprotein complexes; the complex class is required to maintain the transcriptionally repressive state of some genes. The chain is Polycomb group RING finger protein 5-B (pcgf5b) from Danio rerio (Zebrafish).